Reading from the N-terminus, the 734-residue chain is Photosystem I P700 chlorophyll a apoprotein A2 (734 aa).

Transmembrane regions (helical) follow at residues 46–69, 135–158, 175–199, 273–291, 330–353, 369–395, 417–439, and 517–535; these read IFAS…FHVA, LYIG…LHLQ, LNHH…HVAL, IAHH…GHMY, LHFQ…QHMY, AALY…IFFI, AIIS…LYVH, and FLVH…LILV. [4Fe-4S] cluster-binding residues include Cys-559 and Cys-568. The next 2 helical transmembrane spans lie at 575–596 and 643–665; these read AFYL…YWHW and LSVW…MFLI. His-654, Met-662, and Tyr-670 together coordinate chlorophyll a. Residue Trp-671 coordinates phylloquinone. The helical transmembrane segment at 707 to 727 threads the bilayer; the sequence is LVGLVHFSVGYIFTYAAFLIA.

It belongs to the PsaA/PsaB family. In terms of assembly, the PsaA/B heterodimer binds the P700 chlorophyll special pair and subsequent electron acceptors. PSI consists of a core antenna complex that captures photons, and an electron transfer chain that converts photonic excitation into a charge separation. The eukaryotic PSI reaction center is composed of at least 11 subunits. The cofactor is P700 is a chlorophyll a/chlorophyll a' dimer, A0 is one or more chlorophyll a, A1 is one or both phylloquinones and FX is a shared 4Fe-4S iron-sulfur center..

It is found in the plastid. Its subcellular location is the chloroplast thylakoid membrane. The enzyme catalyses reduced [plastocyanin] + hnu + oxidized [2Fe-2S]-[ferredoxin] = oxidized [plastocyanin] + reduced [2Fe-2S]-[ferredoxin]. PsaA and PsaB bind P700, the primary electron donor of photosystem I (PSI), as well as the electron acceptors A0, A1 and FX. PSI is a plastocyanin-ferredoxin oxidoreductase, converting photonic excitation into a charge separation, which transfers an electron from the donor P700 chlorophyll pair to the spectroscopically characterized acceptors A0, A1, FX, FA and FB in turn. Oxidized P700 is reduced on the lumenal side of the thylakoid membrane by plastocyanin. This is Photosystem I P700 chlorophyll a apoprotein A2 from Gnetum parvifolium (Small-leaved jointfir).